A 96-amino-acid polypeptide reads, in one-letter code: Co-chaperonin GroES (96 aa).

It belongs to the GroES chaperonin family. In terms of assembly, heptamer of 7 subunits arranged in a ring. Interacts with the chaperonin GroEL.

The protein localises to the cytoplasm. Functionally, together with the chaperonin GroEL, plays an essential role in assisting protein folding. The GroEL-GroES system forms a nano-cage that allows encapsulation of the non-native substrate proteins and provides a physical environment optimized to promote and accelerate protein folding. GroES binds to the apical surface of the GroEL ring, thereby capping the opening of the GroEL channel. This chain is Co-chaperonin GroES, found in Colwellia maris.